A 144-amino-acid polypeptide reads, in one-letter code: uncharacterized protein (144 aa).

Residues 1 to 16 (MRKFLIVLLLPLLVLA) form the signal peptide.

This is an uncharacterized protein from Aquifex aeolicus (strain VF5).